The primary structure comprises 231 residues: tRNA (guanine-N(7)-)-methyltransferase (231 aa).

S-adenosyl-L-methionine-binding residues include glutamate 62, glutamate 87, aspartate 114, and aspartate 137. Aspartate 137 is a catalytic residue. Substrate contacts are provided by residues lysine 141, aspartate 173, and threonine 210–glutamate 213.

Belongs to the class I-like SAM-binding methyltransferase superfamily. TrmB family.

It catalyses the reaction guanosine(46) in tRNA + S-adenosyl-L-methionine = N(7)-methylguanosine(46) in tRNA + S-adenosyl-L-homocysteine. It functions in the pathway tRNA modification; N(7)-methylguanine-tRNA biosynthesis. In terms of biological role, catalyzes the formation of N(7)-methylguanine at position 46 (m7G46) in tRNA. This Methylococcus capsulatus (strain ATCC 33009 / NCIMB 11132 / Bath) protein is tRNA (guanine-N(7)-)-methyltransferase.